The chain runs to 240 residues: 1-(5-phosphoribosyl)-5-[(5-phosphoribosylamino)methylideneamino] imidazole-4-carboxamide isomerase (240 aa).

The active-site Proton acceptor is the Asp-8. Catalysis depends on Asp-129, which acts as the Proton donor.

The protein belongs to the HisA/HisF family.

It localises to the cytoplasm. The enzyme catalyses 1-(5-phospho-beta-D-ribosyl)-5-[(5-phospho-beta-D-ribosylamino)methylideneamino]imidazole-4-carboxamide = 5-[(5-phospho-1-deoxy-D-ribulos-1-ylimino)methylamino]-1-(5-phospho-beta-D-ribosyl)imidazole-4-carboxamide. It functions in the pathway amino-acid biosynthesis; L-histidine biosynthesis; L-histidine from 5-phospho-alpha-D-ribose 1-diphosphate: step 4/9. This is 1-(5-phosphoribosyl)-5-[(5-phosphoribosylamino)methylideneamino] imidazole-4-carboxamide isomerase from Herpetosiphon aurantiacus (strain ATCC 23779 / DSM 785 / 114-95).